Here is a 524-residue protein sequence, read N- to C-terminus: MPSVYGFPAFTSATELLLAVTTFCLGFWVVRVTRTWVPKGLKSPPGPWGLPFIGHVLTLGKNPHLSLTKLSQQYGDVLQIRIGSTPVVVLSGLNTIKQALVKQGDDFKGRPDLYSFTLIANGQSMTFNPDSGPLWAARRRLAQNALKSFSIASDPTLASSCYLEEHVSKEAEYLISKFQKLMAEVGHFDPFKYLVVSVANVICAICFGRRYDHDDQELLSIVNLSNEFGEVTGSGYPADFIPILRYLPNSSLDAFKDLNKKFYSFMKKLIKEHYRTFEKGHIRDITDSLIEHCQDRRLDENANVQLSDDKVITIVFDLFGAGFDTITTAISWSLMYLVTNPRIQRKIQEELDTVIGRDRQPRLSDRPQLPYLEAFILETFRHSSFVPFTIPHSTIRDTSLNGFYIPKGHCVFVNQWQVNHDQELWGDPNEFRPERFLTSSGTLDKHLSEKVILFGLGKRKCIGETIGRLEVFLFLAILLQQMEFNVSPGEKVDMTPAYGLTLKHARCEHFQVQMRSSGPQHLQA.

The segment at 33–44 (TRTWVPKGLKSP) is mitochondrial targeting signal. O-linked (GlcNAc) serine glycosylation is present at Ser-71. Residue Phe-228 participates in substrate binding. Cys-461 provides a ligand contact to heme.

The protein belongs to the cytochrome P450 family. Both Cytochrome P450MT2A and Cytochrome P450MT2B interact with cytosolic chaperones HSP70 and HSP90; this interaction is required for initial targeting to mitochondria. P450MT2B interacts (via mitochondrial targeting signal) with TOMM40 (via N-terminus); this interaction is required for translocation across the mitochondrial outer membrane. It depends on heme as a cofactor. In terms of processing, two forms; MT2A (long form) and MT2B (short form); are produced by NH2-terminal proteolytic cleavage. This cleavage activates a cryptic mitochondrial targeting signal. In terms of tissue distribution, liver.

It is found in the cytoplasm. Its subcellular location is the endoplasmic reticulum membrane. The protein resides in the mitochondrion inner membrane. It localises to the microsome membrane. The catalysed reaction is an organic molecule + reduced [NADPH--hemoprotein reductase] + O2 = an alcohol + oxidized [NADPH--hemoprotein reductase] + H2O + H(+). The enzyme catalyses estrone + reduced [NADPH--hemoprotein reductase] + O2 = 2-hydroxyestrone + oxidized [NADPH--hemoprotein reductase] + H2O + H(+). It carries out the reaction estrone + reduced [NADPH--hemoprotein reductase] + O2 = 4-hydroxyestrone + oxidized [NADPH--hemoprotein reductase] + H2O + H(+). It catalyses the reaction estrone + reduced [NADPH--hemoprotein reductase] + O2 = 6alpha-hydroxyestrone + oxidized [NADPH--hemoprotein reductase] + H2O + H(+). The catalysed reaction is estrone + reduced [NADPH--hemoprotein reductase] + O2 = 15alpha-hydroxyestrone + oxidized [NADPH--hemoprotein reductase] + H2O + H(+). The enzyme catalyses estrone + reduced [NADPH--hemoprotein reductase] + O2 = 16alpha-hydroxyestrone + oxidized [NADPH--hemoprotein reductase] + H2O + H(+). It carries out the reaction 17beta-estradiol + reduced [NADPH--hemoprotein reductase] + O2 = 2-hydroxy-17beta-estradiol + oxidized [NADPH--hemoprotein reductase] + H2O + H(+). It catalyses the reaction 17beta-estradiol + reduced [NADPH--hemoprotein reductase] + O2 = 4-hydroxy-17beta-estradiol + oxidized [NADPH--hemoprotein reductase] + H2O + H(+). The catalysed reaction is 17beta-estradiol + reduced [NADPH--hemoprotein reductase] + O2 = 6alpha-hydroxy-17beta-estradiol + oxidized [NADPH--hemoprotein reductase] + H2O + H(+). The enzyme catalyses 17beta-estradiol + reduced [NADPH--hemoprotein reductase] + O2 = 7alpha-hydroxy-17beta-estradiol + oxidized [NADPH--hemoprotein reductase] + H2O + H(+). It carries out the reaction 17beta-estradiol + reduced [NADPH--hemoprotein reductase] + O2 = 15alpha-hydroxy-17beta-estradiol + oxidized [NADPH--hemoprotein reductase] + H2O + H(+). It catalyses the reaction (5Z,8Z,11Z)-eicosatrienoate + reduced [NADPH--hemoprotein reductase] + O2 = 19-hydroxy-(5Z,8Z,11Z)-eicosatrienoate + oxidized [NADPH--hemoprotein reductase] + H2O + H(+). The catalysed reaction is (5Z,8Z,11Z,14Z)-eicosatetraenoate + reduced [NADPH--hemoprotein reductase] + O2 = 16-hydroxy-(5Z,8Z,11Z,14Z)-eicosatetraenoate + oxidized [NADPH--hemoprotein reductase] + H2O + H(+). The enzyme catalyses (5Z,8Z,11Z,14Z)-eicosatetraenoate + reduced [NADPH--hemoprotein reductase] + O2 = 17-hydroxy-(5Z,8Z,11Z,14Z)-eicosatetraenoate + oxidized [NADPH--hemoprotein reductase] + H2O + H(+). It carries out the reaction (5Z,8Z,11Z,14Z)-eicosatetraenoate + reduced [NADPH--hemoprotein reductase] + O2 = 18-hydroxy-(5Z,8Z,11Z,14Z)-eicosatetraenoate + oxidized [NADPH--hemoprotein reductase] + H2O + H(+). It catalyses the reaction (5Z,8Z,11Z,14Z)-eicosatetraenoate + reduced [NADPH--hemoprotein reductase] + O2 = 19-hydroxy-(5Z,8Z,11Z,14Z)-eicosatetraenoate + oxidized [NADPH--hemoprotein reductase] + H2O + H(+). The catalysed reaction is (5Z,8Z,11Z,14Z,17Z)-eicosapentaenoate + reduced [NADPH--hemoprotein reductase] + O2 = 19-hydroxy-(5Z,8Z,11Z,14Z,17Z)-eicosapentaenoate + oxidized [NADPH--hemoprotein reductase] + H2O + H(+). The enzyme catalyses (5Z,8Z,11Z,14Z)-eicosatetraenoate + reduced [NADPH--hemoprotein reductase] + O2 = (8R,9S)-epoxy-(5Z,11Z,14Z)-eicosatrienoate + oxidized [NADPH--hemoprotein reductase] + H2O + H(+). It carries out the reaction (5Z,8Z,11Z,14Z)-eicosatetraenoate + reduced [NADPH--hemoprotein reductase] + O2 = (11R,12S)-epoxy-(5Z,8Z,14Z)-eicosatrienoate + oxidized [NADPH--hemoprotein reductase] + H2O + H(+). It catalyses the reaction (5Z,8Z,11Z,14Z)-eicosatetraenoate + reduced [NADPH--hemoprotein reductase] + O2 = (11S,12R)-epoxy-(5Z,8Z,14Z)-eicosatrienoate + oxidized [NADPH--hemoprotein reductase] + H2O + H(+). The catalysed reaction is (5Z,8Z,11Z,14Z)-eicosatetraenoate + reduced [NADPH--hemoprotein reductase] + O2 = (14R,15S)-epoxy-(5Z,8Z,11Z)-eicosatrienoate + oxidized [NADPH--hemoprotein reductase] + H2O + H(+). The enzyme catalyses (5Z,8Z,11Z,14Z,17Z)-eicosapentaenoate + reduced [NADPH--hemoprotein reductase] + O2 = (17R,18S)-epoxy-(5Z,8Z,11Z,14Z)-eicosatetraenoate + oxidized [NADPH--hemoprotein reductase] + H2O + H(+). It carries out the reaction (4Z,7Z,10Z,13Z,16Z,19Z)-docosahexaenoate + reduced [NADPH--hemoprotein reductase] + O2 = (19S,20R)-epoxy-(4Z,7Z,10Z,13Z,16Z)-docosapentaenoate + oxidized [NADPH--hemoprotein reductase] + H2O + H(+). It catalyses the reaction (4Z,7Z,10Z,13Z,16Z,19Z)-docosahexaenoate + reduced [NADPH--hemoprotein reductase] + O2 = (19R,20S)-epoxy-(4Z,7Z,10Z,13Z,16Z)-docosapentaenoate + oxidized [NADPH--hemoprotein reductase] + H2O + H(+). The catalysed reaction is all-trans-retinol + reduced [NADPH--hemoprotein reductase] + O2 = all-trans-retinal + oxidized [NADPH--hemoprotein reductase] + 2 H2O + H(+). The enzyme catalyses all-trans-retinal + reduced [NADPH--hemoprotein reductase] + O2 = all-trans-retinoate + oxidized [NADPH--hemoprotein reductase] + H2O + 2 H(+). It carries out the reaction (13S)-hydroperoxy-(9Z,11E)-octadecadienoate = 13-oxo-(9Z,11E)-octadecadienoate + H2O. It catalyses the reaction (12S)-hydroperoxy-(5Z,8Z,10E,14Z)-eicosatetraenoate = 12-oxo-(5Z,8Z,10E,14Z)-eicosatetraenoate + H2O. The catalysed reaction is (15S)-hydroperoxy-(5Z,8Z,11Z,13E)-eicosatetraenoate = 15-oxo-(5Z,8Z,11Z,13E)-eicosatetraenoate + H2O. The enzyme catalyses (5S)-hydroperoxy-(6E,8Z,11Z,14Z)-eicosatetraenoate = 5-oxo-(6E,8Z,11Z,14Z)-eicosatetraenoate + H2O. The protein operates within steroid hormone biosynthesis. It participates in lipid metabolism; fatty acid metabolism. It functions in the pathway cofactor metabolism; retinol metabolism. In terms of biological role, a cytochrome P450 monooxygenase involved in the metabolism of various endogenous substrates, including fatty acids, steroid hormones and vitamins. Mechanistically, uses molecular oxygen inserting one oxygen atom into a substrate, and reducing the second into a water molecule, with two electrons provided by NADPH via cytochrome P450 reductase (CPR; NADPH-ferrihemoprotein reductase). Catalyzes the hydroxylation of carbon-hydrogen bonds. Exhibits high catalytic activity for the formation of hydroxyestrogens from estrone (E1) and 17beta-estradiol (E2), namely 2-hydroxy E1 and E2, as well as D-ring hydroxylated E1 and E2 at the C15alpha and C16alpha positions. Displays different regioselectivities for polyunsaturated fatty acids (PUFA) hydroxylation. Catalyzes the epoxidation of double bonds of certain PUFA. Converts arachidonic acid toward epoxyeicosatrienoic acid (EET) regioisomers, 8,9-, 11,12-, and 14,15-EET, that function as lipid mediators in the vascular system. Displays an absolute stereoselectivity in the epoxidation of eicosapentaenoic acid (EPA) producing the 17(R),18(S) enantiomer. May play an important role in all-trans retinoic acid biosynthesis in extrahepatic tissues. Catalyzes two successive oxidative transformation of all-trans retinol to all-trans retinal and then to the active form all-trans retinoic acid. May also participate in eicosanoids metabolism by converting hydroperoxide species into oxo metabolites (lipoxygenase-like reaction, NADPH-independent). The sequence is that of Cytochrome P450 1A1 from Rattus norvegicus (Rat).